A 276-amino-acid polypeptide reads, in one-letter code: Shikimate dehydrogenase (NADP(+)) (276 aa).

Shikimate contacts are provided by residues serine 15 to serine 17 and threonine 62. Lysine 66 acts as the Proton acceptor in catalysis. Asparagine 87 and aspartate 103 together coordinate shikimate. NADP(+) is bound by residues glycine 127–alanine 131, asparagine 151–lysine 156, and methionine 215. Tyrosine 217 contributes to the shikimate binding site. Glycine 239 is a binding site for NADP(+).

This sequence belongs to the shikimate dehydrogenase family. Homodimer.

The catalysed reaction is shikimate + NADP(+) = 3-dehydroshikimate + NADPH + H(+). It participates in metabolic intermediate biosynthesis; chorismate biosynthesis; chorismate from D-erythrose 4-phosphate and phosphoenolpyruvate: step 4/7. Involved in the biosynthesis of the chorismate, which leads to the biosynthesis of aromatic amino acids. Catalyzes the reversible NADPH linked reduction of 3-dehydroshikimate (DHSA) to yield shikimate (SA). In Cellvibrio japonicus (strain Ueda107) (Pseudomonas fluorescens subsp. cellulosa), this protein is Shikimate dehydrogenase (NADP(+)).